The sequence spans 55 residues: Large ribosomal subunit protein bL33 (55 aa).

A compositionally biased stretch (basic and acidic residues) spans 1–11 (MAKGGREKIKL). Residues 1–27 (MAKGGREKIKLESTAGTGHFYTTSKNK) are disordered. Polar residues predominate over residues 14–24 (TAGTGHFYTTS).

This sequence belongs to the bacterial ribosomal protein bL33 family.

This chain is Large ribosomal subunit protein bL33, found in Dechloromonas aromatica (strain RCB).